The sequence spans 2410 residues: Genome polyprotein 1 (2410 aa).

Residues 1–22 (MEQTLAQAVSRKSKTDTPMAEE) form a disordered region. One can recognise a Helicase ATP-binding domain in the interval 474–632 (KMADANNCWS…AARKYPLHVE (159 aa)). 487 to 494 (GHTGSGKS) serves as a coordination point for ATP. One can recognise a Helicase C-terminal domain in the interval 647-813 (GGGDLLDISK…NVPFYMNETF (167 aa)). Residue Tyr-1234 is modified to O-(5'-phospho-RNA)-tyrosine. Residues 1359-1573 (ITLEASTGIL…CGYASHTALF (215 aa)) enclose the Peptidase C4 domain. Catalysis depends on for nuclear inclusion protein A activity residues His-1404, Asp-1440, and Cys-1507. The RdRp catalytic domain occupies 1857–1980 (WLHGSGDGSR…AISPQFDEEF (124 aa)). A disordered region spans residues 2173-2200 (TRTPTEDDGKLKTPSGARIPSSAADGNW).

The protein belongs to the bymoviruses polyprotein 1 family. In terms of processing, VPg is uridylylated by the polymerase and is covalently attached to the 5'-end of the genomic RNA. This uridylylated form acts as a nucleotide-peptide primer for the polymerase. The viral RNA1 of bymoviruses is expressed as a single polyprotein which undergoes post-translational proteolytic processing by the main proteinase NIa-pro resulting in the production of at least eight individual proteins.

It localises to the host cytoplasmic vesicle. The protein localises to the virion. The catalysed reaction is RNA(n) + a ribonucleoside 5'-triphosphate = RNA(n+1) + diphosphate. It catalyses the reaction Hydrolyzes glutaminyl bonds, and activity is further restricted by preferences for the amino acids in P6 - P1' that vary with the species of potyvirus, e.g. Glu-Xaa-Xaa-Tyr-Xaa-Gln-|-(Ser or Gly) for the enzyme from tobacco etch virus. The natural substrate is the viral polyprotein, but other proteins and oligopeptides containing the appropriate consensus sequence are also cleaved.. Functionally, indispensable for virus replication. Mediates the cap-independent, EIF4E-dependent translation of viral genomic RNAs. Binds to the cap-binding site of host EIF4E and thus interferes with the host EIF4E-dependent mRNA export and translation. VPg-RNA directly binds EIF4E and is a template for transcription. Also forms trimeric complexes with EIF4E-EIF4G, which are templates for translation. Its function is as follows. Has RNA-binding and proteolytic activities. In terms of biological role, an RNA-dependent RNA polymerase that plays an essential role in the virus replication. In Hordeum vulgare (Barley), this protein is Genome polyprotein 1.